The primary structure comprises 131 residues: Fatty acid-binding protein (131 aa).

(5Z,8Z,11Z,14Z)-eicosatetraenoate-binding positions include Arg106 and 126–128 (RFY). (9Z)-octadecenoate contacts are provided by residues Arg106 and 126–128 (RFY).

This sequence belongs to the calycin superfamily. Fatty-acid binding protein (FABP) family.

The protein resides in the cytoplasm. FABPs are thought to play a role in the intracellular transport of long-chain fatty acids and their acyl-CoA esters. This Tyrophagus putrescentiae (Mold mite) protein is Fatty acid-binding protein.